The chain runs to 302 residues: Large ribosomal subunit protein uL29m (302 aa).

The transit peptide at 1–38 (MASSGAARPAASRVLQRCQPFSSSTSCAAPVTTWRTLA) directs the protein to the mitochondrion. Residues 255-302 (EPVADHLETPETSGQEKVGELSPAGAVDPSTILASKTGKPVTDAPRSS) form a disordered region.

Belongs to the universal ribosomal protein uL29 family. In terms of assembly, component of the mitochondrial large ribosomal subunit. Mature mitochondrial ribosomes consist of a small (37S) and a large (54S) subunit. The 37S subunit contains at least 33 different proteins and 1 molecule of RNA (15S). The 54S subunit contains at least 45 different proteins and 1 molecule of RNA (21S).

It is found in the mitochondrion. The polypeptide is Large ribosomal subunit protein uL29m (MRPL4) (Pyricularia oryzae (strain 70-15 / ATCC MYA-4617 / FGSC 8958) (Rice blast fungus)).